The primary structure comprises 345 residues: uncharacterized protein (345 aa).

This is an uncharacterized protein from Acidianus filamentous virus 2 (isolate Italy/Pozzuoli) (AFV-2).